Consider the following 429-residue polypeptide: Formate-dependent phosphoribosylglycinamide formyltransferase (429 aa).

N(1)-(5-phospho-beta-D-ribosyl)glycinamide contacts are provided by residues 26-27 (EL) and E86. ATP-binding positions include R118, K159, 199-202 (EEHI), and E207. Residues 123-319 (ETLVKEAKVP…EFGLHLRAVL (197 aa)) form the ATP-grasp domain. The Mg(2+) site is built by E276 and E288. Residues D295, K375, and 382–383 (RR) contribute to the N(1)-(5-phospho-beta-D-ribosyl)glycinamide site.

Belongs to the PurK/PurT family. Homodimer.

It carries out the reaction N(1)-(5-phospho-beta-D-ribosyl)glycinamide + formate + ATP = N(2)-formyl-N(1)-(5-phospho-beta-D-ribosyl)glycinamide + ADP + phosphate + H(+). It functions in the pathway purine metabolism; IMP biosynthesis via de novo pathway; N(2)-formyl-N(1)-(5-phospho-D-ribosyl)glycinamide from N(1)-(5-phospho-D-ribosyl)glycinamide (formate route): step 1/1. Involved in the de novo purine biosynthesis. Catalyzes the transfer of formate to 5-phospho-ribosyl-glycinamide (GAR), producing 5-phospho-ribosyl-N-formylglycinamide (FGAR). Formate is provided by PurU via hydrolysis of 10-formyl-tetrahydrofolate. The polypeptide is Formate-dependent phosphoribosylglycinamide formyltransferase (Pyrococcus abyssi (strain GE5 / Orsay)).